Consider the following 1774-residue polypeptide: Receptor-mediated endocytosis protein 6 homolog (1774 aa).

Residues glutamate 157–glutamine 396 enclose the Ras-GAP domain. Disordered regions lie at residues isoleucine 444–serine 480, proline 517–threonine 564, alanine 661–glycine 727, glutamate 784–serine 811, alanine 869–alanine 947, glutamate 983–proline 1102, glutamine 1115–glutamine 1142, and arginine 1214–serine 1342. Composition is skewed to low complexity over residues alanine 519–asparagine 533 and serine 540–alanine 557. Over residues glutamine 674–glutamate 683 the composition is skewed to basic and acidic residues. Positions aspartate 688–threonine 713 are enriched in polar residues. The span at arginine 794 to asparagine 809 shows a compositional bias: basic and acidic residues. The segment covering proline 887 to valine 905 has biased composition (gly residues). Residues aspartate 929–glutamate 944 are compositionally biased toward basic and acidic residues. The segment covering methionine 1011–asparagine 1027 has biased composition (polar residues). Over residues leucine 1038 to histidine 1047 the composition is skewed to basic residues. The span at arginine 1048–histidine 1060 shows a compositional bias: basic and acidic residues. The segment covering arginine 1061–glutamine 1076 has biased composition (basic residues). A compositionally biased stretch (basic and acidic residues) spans glutamate 1077–isoleucine 1087. Over residues aspartate 1091–glutamine 1101 the composition is skewed to acidic residues. Low complexity predominate over residues glutamine 1115–glutamine 1125. The segment covering serine 1246–serine 1291 has biased composition (basic and acidic residues). The span at serine 1310–alanine 1335 shows a compositional bias: low complexity. The stretch at arginine 1516–leucine 1546 forms a coiled coil. The VPS9 domain occupies valine 1635–aspartate 1774.

This sequence belongs to the GAPVD1 family.

It is found in the membrane. Acts both as a GTPase-activating protein (GAP) and a guanine nucleotide exchange factor (GEF), and participates in endocytosis. This chain is Receptor-mediated endocytosis protein 6 homolog, found in Drosophila pseudoobscura pseudoobscura (Fruit fly).